The following is a 521-amino-acid chain: Importin subunit alpha-4 (521 aa).

The tract at residues 1 to 29 (MAENPGLENHRIKSFKNKGRDVETMRRHR) is disordered. Ala2 is subject to N-acetylalanine. Residues 2–58 (AENPGLENHRIKSFKNKGRDVETMRRHRNEVTVELRKNKRDEHLLKKRNVPQEESLE) form the IBB domain. Residues 18 to 29 (KGRDVETMRRHR) are compositionally biased toward basic and acidic residues. The Nuclear localization signal motif lies at 43-52 (EHLLKKRNVP). Residues Ser56 and Ser60 each carry the phosphoserine modification. Residues 66 to 106 (FKAQNVTLEAILQNATSDNPVVQLSAVQAARKLLSSDRNPP) form an ARM 1; truncated repeat. ARM repeat units lie at residues 107–149 (IDDL…TSAQ), 150–194 (TQAV…CRDY), 195–233 (VISL…NKDP), 234–278 (PPPM…EQIQ), 279–318 (MVID…TDEQ), 319–360 (TQVV…NQQQ), 361–400 (VQAV…ISGR), and 401–443 (KDQV…IMAG). The segment at 137-229 (WALTNIASGT…VTWVIVNLCR (93 aa)) is NLS binding site (major). The interval 306–394 (RAVGNIVTGT…QKEAAWAISN (89 aa)) is NLS binding site (minor). The ARM 10; atypical repeat unit spans residues 447–485 (STIAEIIEECGGLEKIEVLQQHENEDIYKLAFEIIDQYF). Tyr484 carries the post-translational modification Phosphotyrosine.

The protein belongs to the importin alpha family. Forms a complex with importin subunit beta-1. Interacts with DDX21. Interacts with NCBP1, NCBP2/CBP20 and NCBP3. Interacts with RCC1. Interacts with ZC3H11A. In terms of tissue distribution, detected more or less in all tissues examined (Ehrlich ascites tumor cells, testis, kidney, spleen, liver, heart, lung, thymus, skeletal muscle, cerebellum and brain (without cerebellum)).

Its subcellular location is the cytoplasm. It localises to the nucleus. Functionally, functions in nuclear protein import as an adapter protein for nuclear receptor KPNB1. Binds specifically and directly to substrates containing either a simple or bipartite NLS motif. Docking of the importin/substrate complex to the nuclear pore complex (NPC) is mediated by KPNB1 through binding to nucleoporin FxFG repeats and the complex is subsequently translocated through the pore by an energy requiring, Ran-dependent mechanism. At the nucleoplasmic side of the NPC, Ran binds to importin-beta and the three components separate and importin-alpha and -beta are re-exported from the nucleus to the cytoplasm where GTP hydrolysis releases Ran from importin. The directionality of nuclear import is thought to be conferred by an asymmetric distribution of the GTP- and GDP-bound forms of Ran between the cytoplasm and nucleus. In vitro, mediates the nuclear import of human cytomegalovirus UL84 by recognizing a non-classical NLS. The sequence is that of Importin subunit alpha-4 (Kpna3) from Mus musculus (Mouse).